Here is a 268-residue protein sequence, read N- to C-terminus: GTP cyclohydrolase FolE2 (268 aa).

The protein belongs to the GTP cyclohydrolase IV family.

It catalyses the reaction GTP + H2O = 7,8-dihydroneopterin 3'-triphosphate + formate + H(+). The protein operates within cofactor biosynthesis; 7,8-dihydroneopterin triphosphate biosynthesis; 7,8-dihydroneopterin triphosphate from GTP: step 1/1. Converts GTP to 7,8-dihydroneopterin triphosphate. This chain is GTP cyclohydrolase FolE2, found in Paraburkholderia phymatum (strain DSM 17167 / CIP 108236 / LMG 21445 / STM815) (Burkholderia phymatum).